The sequence spans 347 residues: N-acetyl-gamma-glutamyl-phosphate reductase (347 aa).

Residue C152 is part of the active site.

The protein belongs to the NAGSA dehydrogenase family. Type 1 subfamily.

The protein localises to the cytoplasm. The enzyme catalyses N-acetyl-L-glutamate 5-semialdehyde + phosphate + NADP(+) = N-acetyl-L-glutamyl 5-phosphate + NADPH + H(+). Its pathway is amino-acid biosynthesis; L-arginine biosynthesis; N(2)-acetyl-L-ornithine from L-glutamate: step 3/4. Its function is as follows. Catalyzes the NADPH-dependent reduction of N-acetyl-5-glutamyl phosphate to yield N-acetyl-L-glutamate 5-semialdehyde. This chain is N-acetyl-gamma-glutamyl-phosphate reductase, found in Ehrlichia ruminantium (strain Gardel).